Here is a 136-residue protein sequence, read N- to C-terminus: Acyl-CoA thioesterase YbgC (136 aa).

The active site involves D18.

It belongs to the 4-hydroxybenzoyl-CoA thioesterase family.

Functionally, displays acyl-CoA thioesterase activity with short chain aliphatic acyl-CoA thioesters, such as propionyl-CoA and butyryl-CoA. Enzyme activity is relatively low, suggesting that the acyl-CoA thioesters used in the assays are not the physiological substrates. Has no detectable activity with 4-hydroxybenzoyl-CoA, lauroyl-CoA (C12:0), arachidoyl-CoA (C20:0) and arachidonoyl-CoA (C20:4). The sequence is that of Acyl-CoA thioesterase YbgC (ybgC) from Haemophilus influenzae (strain ATCC 51907 / DSM 11121 / KW20 / Rd).